Consider the following 59-residue polypeptide: UPF0181 protein YoaH (59 aa).

Belongs to the UPF0181 family.

The polypeptide is UPF0181 protein YoaH (Salmonella arizonae (strain ATCC BAA-731 / CDC346-86 / RSK2980)).